The following is a 366-amino-acid chain: D-alanine--D-alanine ligase (366 aa).

Residues 148-357 (KMTFEQAGLA…FPELVDRLIQ (210 aa)) enclose the ATP-grasp domain. 184–239 (EAALGYPAFVKPANLGSSVGIAKVRSRQELEAALDNAASYDRRLVVEAGVVAREVE) contacts ATP. Positions 310, 324, and 326 each coordinate Mg(2+).

This sequence belongs to the D-alanine--D-alanine ligase family. The cofactor is Mg(2+). Requires Mn(2+) as cofactor.

The protein resides in the cytoplasm. It catalyses the reaction 2 D-alanine + ATP = D-alanyl-D-alanine + ADP + phosphate + H(+). Its pathway is cell wall biogenesis; peptidoglycan biosynthesis. Its function is as follows. Cell wall formation. This chain is D-alanine--D-alanine ligase, found in Nostoc punctiforme (strain ATCC 29133 / PCC 73102).